The chain runs to 711 residues: Probable cyclic nucleotide-gated ion channel 10 (711 aa).

Residues 1–81 are Cytoplasmic-facing; that stretch reads MAFSHDNRVR…QDSFLQNWNK (81 aa). Residues 82-102 form a helical membrane-spanning segment; that stretch reads IFLFACVVALAIDPLFFYIPI. Over 103-116 the chain is Extracellular; sequence VDSARHCLTLDSKL. The chain crosses the membrane as a helical span at residues 117–137; sequence EIAASLLRTLIDAFYIIHIVF. Residues 138 to 170 are Cytoplasmic-facing; that stretch reads QFRTAYIAPSSRVFGRGELVDDAKAIALKYLSS. The chain crosses the membrane as a helical span at residues 171 to 191; the sequence is YFIIDLLSILPLPQIVVLAVI. Residues 192–204 are Extracellular-facing; sequence PSVNQPVSLLTKD. Residues 205-225 form a helical membrane-spanning segment; the sequence is YLKFSIIAQYVPRILRMYPLY. At 226–243 the chain is on the cytoplasmic side; sequence TEVTRTSGIVTETAWAGA. Residues 244-264 form a helical membrane-spanning segment; sequence AWNLSLYMLASHVFGALWYLI. At 265–366 the chain is on the extracellular side; the sequence is SVEREDRCWQ…GQNLQTSKFV (102 aa). The helical transmembrane segment at 367–387 threads the bilayer; that stretch reads GEIIFAISICISGLVLFALLI. Topologically, residues 388–711 are cytoplasmic; sequence GNMQKYLEST…DFTANHTTDP (324 aa). A nucleoside 3',5'-cyclic phosphate-binding positions include 473 to 603 and Glu-544; that span reads LFEI…TFRF. The calmodulin-binding stretch occupies residues 589–604; it reads FRRLHSKQLQHTFRFY. One can recognise an IQ domain in the interval 609 to 638; the sequence is RTWSVSFIQAAWRRYCRRKLAKSLRDEEDR. The tract at residues 689–711 is disordered; sequence YTLPLLPQKPTEPDFTANHTTDP.

Belongs to the cyclic nucleotide-gated cation channel (TC 1.A.1.5) family. In terms of assembly, homotetramer or heterotetramer.

The protein localises to the cell membrane. Functionally, probable cyclic nucleotide-gated ion channel. The polypeptide is Probable cyclic nucleotide-gated ion channel 10 (CNGC10) (Arabidopsis thaliana (Mouse-ear cress)).